A 320-amino-acid polypeptide reads, in one-letter code: Malate dehydrogenase (320 aa).

Residues 10 to 15 and D34 each bind NAD(+); that span reads GSGMIG. Substrate-binding residues include R83 and R89. Residues N96 and 119-121 contribute to the NAD(+) site; that span reads ITN. Residues N121 and R152 each coordinate substrate. Catalysis depends on H176, which acts as the Proton acceptor.

It belongs to the LDH/MDH superfamily. MDH type 3 family.

It carries out the reaction (S)-malate + NAD(+) = oxaloacetate + NADH + H(+). Catalyzes the reversible oxidation of malate to oxaloacetate. This chain is Malate dehydrogenase, found in Brucella canis (strain ATCC 23365 / NCTC 10854 / RM-666).